Reading from the N-terminus, the 203-residue chain is ATP synthase subunit delta, chloroplastic (203 aa).

It belongs to the ATPase delta chain family. In terms of assembly, F-type ATPases have 2 components, F(1) - the catalytic core - and F(0) - the membrane proton channel. F(1) has five subunits: alpha(3), beta(3), gamma(1), delta(1), epsilon(1). CF(0) has four main subunits: a(1), b(1), b'(1) and c(10-14). The alpha and beta chains form an alternating ring which encloses part of the gamma chain. F(1) is attached to F(0) by a central stalk formed by the gamma and epsilon chains, while a peripheral stalk is formed by the delta, b and b' chains.

It is found in the plastid. The protein resides in the chloroplast thylakoid membrane. Its function is as follows. F(1)F(0) ATP synthase produces ATP from ADP in the presence of a proton or sodium gradient. F-type ATPases consist of two structural domains, F(1) containing the extramembraneous catalytic core and F(0) containing the membrane proton channel, linked together by a central stalk and a peripheral stalk. During catalysis, ATP synthesis in the catalytic domain of F(1) is coupled via a rotary mechanism of the central stalk subunits to proton translocation. In terms of biological role, this protein is part of the stalk that links CF(0) to CF(1). It either transmits conformational changes from CF(0) to CF(1) or is implicated in proton conduction. The polypeptide is ATP synthase subunit delta, chloroplastic (Heterosigma akashiwo (strain NIES-293 / 8280G21-1)).